Consider the following 369-residue polypeptide: Holliday junction branch migration complex subunit RuvB (369 aa).

The interval 1-21 (MHKNENNRLLGSVSLPDDPDR) is disordered. The interval 1 to 184 (MHKNENNRLL…FGIPIRLNFY (184 aa)) is large ATPase domain (RuvB-L). Residues L23, R24, G65, K68, T69, T70, 131–133 (EDY), R174, Y184, and R221 contribute to the ATP site. T69 contributes to the Mg(2+) binding site. Residues 185 to 255 (TIEELEYIVK…IADTALSRLE (71 aa)) are small ATPAse domain (RuvB-S). The tract at residues 258-369 (HLGLDPLDRN…QKHLWEKDYD (112 aa)) is head domain (RuvB-H). DNA is bound by residues R294, R313, and R318.

This sequence belongs to the RuvB family. As to quaternary structure, homohexamer. Forms an RuvA(8)-RuvB(12)-Holliday junction (HJ) complex. HJ DNA is sandwiched between 2 RuvA tetramers; dsDNA enters through RuvA and exits via RuvB. An RuvB hexamer assembles on each DNA strand where it exits the tetramer. Each RuvB hexamer is contacted by two RuvA subunits (via domain III) on 2 adjacent RuvB subunits; this complex drives branch migration. In the full resolvosome a probable DNA-RuvA(4)-RuvB(12)-RuvC(2) complex forms which resolves the HJ.

The protein resides in the cytoplasm. The catalysed reaction is ATP + H2O = ADP + phosphate + H(+). In terms of biological role, the RuvA-RuvB-RuvC complex processes Holliday junction (HJ) DNA during genetic recombination and DNA repair, while the RuvA-RuvB complex plays an important role in the rescue of blocked DNA replication forks via replication fork reversal (RFR). RuvA specifically binds to HJ cruciform DNA, conferring on it an open structure. The RuvB hexamer acts as an ATP-dependent pump, pulling dsDNA into and through the RuvAB complex. RuvB forms 2 homohexamers on either side of HJ DNA bound by 1 or 2 RuvA tetramers; 4 subunits per hexamer contact DNA at a time. Coordinated motions by a converter formed by DNA-disengaged RuvB subunits stimulates ATP hydrolysis and nucleotide exchange. Immobilization of the converter enables RuvB to convert the ATP-contained energy into a lever motion, pulling 2 nucleotides of DNA out of the RuvA tetramer per ATP hydrolyzed, thus driving DNA branch migration. The RuvB motors rotate together with the DNA substrate, which together with the progressing nucleotide cycle form the mechanistic basis for DNA recombination by continuous HJ branch migration. Branch migration allows RuvC to scan DNA until it finds its consensus sequence, where it cleaves and resolves cruciform DNA. The protein is Holliday junction branch migration complex subunit RuvB of Bartonella bacilliformis (strain ATCC 35685 / KC583 / Herrer 020/F12,63).